The chain runs to 155 residues: Fibroblast growth factor 2 (155 aa).

Residues 1 to 9 constitute a propeptide that is removed on maturation; that stretch reads MAAGSITTL. Residues 1-20 are disordered; the sequence is MAAGSITTLPALPEDGGSGA. Asparagine 36 is a heparin binding site. The short motif at 46–48 is the Cell attachment site; atypical element; sequence DGR. Position 82 is a phosphotyrosine; by TEC (tyrosine 82). Positions 88-90 match the Cell attachment site; atypical motif; sequence DGR. Lysine 95 participates in a covalent cross-link: Glycyl lysine isopeptide (Lys-Gly) (interchain with G-Cter in SUMO1). Residues 128 to 144 form a heparin-binding region; that stretch reads KRTGQYKLGPKTGPGQK.

The protein belongs to the heparin-binding growth factors family. In terms of assembly, monomer. Homodimer. Interacts with FGFR1, FGFR2, FGFR3 and FGFR4. Affinity between fibroblast growth factors (FGFs) and their receptors is increased by heparan sulfate glycosaminoglycans that function as coreceptors. Interacts with CSPG4, FGFBP1 and TEC. Found in a complex with FGFBP1, FGF1 and FGF2. Interacts with FGFBP3. Interacts with integrin ITGAV:ITGB3; the interaction is required for FGF2 signaling. Interacts with SNORC (via the extracellular domain). Interacts with glypican GPC3. Post-translationally, phosphorylation at Tyr-82 regulates FGF2 unconventional secretion.

The protein resides in the secreted. It localises to the nucleus. Acts as a ligand for FGFR1, FGFR2, FGFR3 and FGFR4. Also acts as an integrin ligand which is required for FGF2 signaling. Binds to integrin ITGAV:ITGB3. Plays an important role in the regulation of cell survival, cell division, cell differentiation and cell migration. Functions as a potent mitogen in vitro. Can induce angiogenesis. Mediates phosphorylation of ERK1/2 and thereby promotes retinal lens fiber differentiation. The sequence is that of Fibroblast growth factor 2 (FGF2) from Bos taurus (Bovine).